Here is a 420-residue protein sequence, read N- to C-terminus: Alpha-ketoglutarate-dependent xanthine dioxygenase xan-1 (420 aa).

Fe cation is bound by residues H157 and D159. Residues T206 and W336 each coordinate 2-oxoglutarate. Residue H351 participates in Fe cation binding. A 2-oxoglutarate-binding site is contributed by R366. R366 provides a ligand contact to substrate.

It belongs to the TfdA dioxygenase family. The cofactor is Fe(2+).

Its subcellular location is the cytoplasm. It is found in the cytosol. It catalyses the reaction xanthine + 2-oxoglutarate + O2 = urate + succinate + CO2. In terms of biological role, alpha-ketoglutarate-dependent xanthine dioxygenase is a non-heme mononuclear Fe(2+) enzyme that decarboxylates alpha-ketoglutarate to succinate and CO(2) while hydroxylating xanthine to generate uric acid. Allows xanthine utilization as a nitrogen source. The protein is Alpha-ketoglutarate-dependent xanthine dioxygenase xan-1 of Neurospora crassa (strain ATCC 24698 / 74-OR23-1A / CBS 708.71 / DSM 1257 / FGSC 987).